Here is a 330-residue protein sequence, read N- to C-terminus: tRNA U34 carboxymethyltransferase (330 aa).

Carboxy-S-adenosyl-L-methionine-binding positions include Lys-91, Trp-105, Lys-110, Gly-130, 152–154 (DPS), 181–182 (IE), Met-196, Tyr-200, and Arg-315.

Belongs to the class I-like SAM-binding methyltransferase superfamily. CmoB family. Homotetramer.

It carries out the reaction carboxy-S-adenosyl-L-methionine + 5-hydroxyuridine(34) in tRNA = 5-carboxymethoxyuridine(34) in tRNA + S-adenosyl-L-homocysteine + H(+). Functionally, catalyzes carboxymethyl transfer from carboxy-S-adenosyl-L-methionine (Cx-SAM) to 5-hydroxyuridine (ho5U) to form 5-carboxymethoxyuridine (cmo5U) at position 34 in tRNAs. The protein is tRNA U34 carboxymethyltransferase of Shewanella sediminis (strain HAW-EB3).